The chain runs to 185 residues: Anterior gradient protein 2 (185 aa).

The N-terminal stretch at 1–18 (MQTGLSLACLVLLCSVLG) is a signal peptide. The tract at residues 25–45 (PKRQAGATDTNGAAKSEPAPV) is disordered.

This sequence belongs to the AGR family. Expressed in the anterior of the dorsal ectoderm from late gastrula stages onwards. Becomes restricted to the cement gland anlage at the onset of neurulation (stages 13 to 14) and expressed exclusively in the cement gland from stage 18 onwards, with transient expression in the hatching gland during tailbud stages.

The protein resides in the secreted. Its function is as follows. Involved in cement gland formation; probably specifies dorsal ectoderm to acquire an anterior fate such as cement gland and forebrain. Signals via the FGF pathway. The sequence is that of Anterior gradient protein 2 (ag2) from Xenopus laevis (African clawed frog).